A 428-amino-acid polypeptide reads, in one-letter code: Tyrosine--tRNA ligase (428 aa).

Tyr-37 contacts L-tyrosine. The 'HIGH' region signature appears at 42-51; it reads PTGSSLHAGH. L-tyrosine-binding residues include Tyr-175 and Gln-179. The 'KMSKS' region motif lies at 235-239; sequence KFGKS. Lys-238 provides a ligand contact to ATP. One can recognise an S4 RNA-binding domain in the interval 358–415; that stretch reads ATILDLLVESGLEKSKGAARRTVGEGGAYVNNQRIEDIEWSPSAEELLHGSWLVLRKG.

The protein belongs to the class-I aminoacyl-tRNA synthetase family. TyrS type 1 subfamily. As to quaternary structure, homodimer.

Its subcellular location is the cytoplasm. It carries out the reaction tRNA(Tyr) + L-tyrosine + ATP = L-tyrosyl-tRNA(Tyr) + AMP + diphosphate + H(+). Functionally, catalyzes the attachment of tyrosine to tRNA(Tyr) in a two-step reaction: tyrosine is first activated by ATP to form Tyr-AMP and then transferred to the acceptor end of tRNA(Tyr). The polypeptide is Tyrosine--tRNA ligase (Corynebacterium jeikeium (strain K411)).